We begin with the raw amino-acid sequence, 147 residues long: Putative pre-16S rRNA nuclease (147 aa).

The protein belongs to the YqgF nuclease family.

It is found in the cytoplasm. Its function is as follows. Could be a nuclease involved in processing of the 5'-end of pre-16S rRNA. The protein is Putative pre-16S rRNA nuclease of Limosilactobacillus reuteri (strain DSM 20016) (Lactobacillus reuteri).